The sequence spans 210 residues: Large ribosomal subunit protein uL5 (210 aa).

The segment at Ala-188 to Lys-210 is disordered. Basic residues predominate over residues Ala-195–Lys-210.

Belongs to the universal ribosomal protein uL5 family. As to quaternary structure, part of the 50S ribosomal subunit; part of the 5S rRNA/L5/L18/L25 subcomplex. Contacts the 5S rRNA and the P site tRNA. Forms a bridge to the 30S subunit in the 70S ribosome.

Functionally, this is one of the proteins that bind and probably mediate the attachment of the 5S RNA into the large ribosomal subunit, where it forms part of the central protuberance. In the 70S ribosome it contacts protein S13 of the 30S subunit (bridge B1b), connecting the 2 subunits; this bridge is implicated in subunit movement. Contacts the P site tRNA; the 5S rRNA and some of its associated proteins might help stabilize positioning of ribosome-bound tRNAs. The sequence is that of Large ribosomal subunit protein uL5 from Cutibacterium acnes (strain DSM 16379 / KPA171202) (Propionibacterium acnes).